The following is a 306-amino-acid chain: Pantothenate kinase (306 aa).

91–98 contributes to the ATP binding site; that stretch reads GSVAVGKS.

The protein belongs to the prokaryotic pantothenate kinase family.

It is found in the cytoplasm. The enzyme catalyses (R)-pantothenate + ATP = (R)-4'-phosphopantothenate + ADP + H(+). It functions in the pathway cofactor biosynthesis; coenzyme A biosynthesis; CoA from (R)-pantothenate: step 1/5. This chain is Pantothenate kinase, found in Streptococcus agalactiae serotype Ia (strain ATCC 27591 / A909 / CDC SS700).